A 194-amino-acid polypeptide reads, in one-letter code: MSAITITDAAHDYLADLLSKQNTPGIGIRIFITQPGTQYAETCIAYCKPGEEKPDDTAVGLKSFTAYLDAVSVPFLEDALVDYATDRMGGQLTIKAPNAKVPMVNEDSPINERINYYLQTEINPGLASHGGQVSLVDVVDDGIAVLQFGGGCQGCGQADVTLKEGIERTLLERIPELKGVRDVTDHTQKENAYY.

Cys152 and Cys155 together coordinate [4Fe-4S] cluster.

This sequence belongs to the NfuA family. As to quaternary structure, homodimer. The cofactor is [4Fe-4S] cluster.

Its function is as follows. Involved in iron-sulfur cluster biogenesis. Binds a 4Fe-4S cluster, can transfer this cluster to apoproteins, and thereby intervenes in the maturation of Fe/S proteins. Could also act as a scaffold/chaperone for damaged Fe/S proteins. This is Fe/S biogenesis protein NfuA from Pseudomonas putida (strain GB-1).